Consider the following 116-residue polypeptide: Small ribosomal subunit protein uS13m (116 aa).

Belongs to the universal ribosomal protein uS13 family. Part of the small ribosomal subunit.

It is found in the mitochondrion. Its function is as follows. Located at the top of the head of the small subunit, it contacts several helices of the 18S rRNA. In Nicotiana tabacum (Common tobacco), this protein is Small ribosomal subunit protein uS13m (RPS13).